An 82-amino-acid polypeptide reads, in one-letter code: Small ribosomal subunit protein uS17 (82 aa).

This sequence belongs to the universal ribosomal protein uS17 family. In terms of assembly, part of the 30S ribosomal subunit.

In terms of biological role, one of the primary rRNA binding proteins, it binds specifically to the 5'-end of 16S ribosomal RNA. This chain is Small ribosomal subunit protein uS17, found in Shewanella denitrificans (strain OS217 / ATCC BAA-1090 / DSM 15013).